A 345-amino-acid polypeptide reads, in one-letter code: Protein RecA (345 aa).

65-72 (GPESSGKT) serves as a coordination point for ATP.

Belongs to the RecA family.

It localises to the cytoplasm. Can catalyze the hydrolysis of ATP in the presence of single-stranded DNA, the ATP-dependent uptake of single-stranded DNA by duplex DNA, and the ATP-dependent hybridization of homologous single-stranded DNAs. It interacts with LexA causing its activation and leading to its autocatalytic cleavage. The polypeptide is Protein RecA (Colwellia psychrerythraea (strain 34H / ATCC BAA-681) (Vibrio psychroerythus)).